Reading from the N-terminus, the 776-residue chain is Mitochondrial intermediate peptidase (776 aa).

Residues 1 to 38 (MLNSARTVLARHSARQLYRFRGCLVHQQRHRHQVQRTL) constitute a mitochondrion transit peptide. Residue His-560 coordinates Zn(2+). Glu-561 is a catalytic residue. The Zn(2+) site is built by His-564 and His-567.

It belongs to the peptidase M3 family. The cofactor is Zn(2+).

It localises to the mitochondrion matrix. It carries out the reaction Release of an N-terminal octapeptide as second stage of processing of some proteins imported into the mitochondrion.. Its function is as follows. Cleaves proteins, imported into the mitochondrion, to their mature size. While most mitochondrial precursor proteins are processed to the mature form in one step by mitochondrial processing peptidase (MPP), the sequential cleavage by MIP of an octapeptide after initial processing by MPP is a required step for a subgroup of nuclear-encoded precursor proteins destined for the matrix or the inner membrane. The polypeptide is Mitochondrial intermediate peptidase (OCT1) (Coprinopsis cinerea (strain Okayama-7 / 130 / ATCC MYA-4618 / FGSC 9003) (Inky cap fungus)).